An 88-amino-acid chain; its full sequence is Small ribosomal subunit protein uS15 (88 aa).

This sequence belongs to the universal ribosomal protein uS15 family. Part of the 30S ribosomal subunit. Forms a bridge to the 50S subunit in the 70S ribosome, contacting the 23S rRNA.

Functionally, one of the primary rRNA binding proteins, it binds directly to 16S rRNA where it helps nucleate assembly of the platform of the 30S subunit by binding and bridging several RNA helices of the 16S rRNA. Forms an intersubunit bridge (bridge B4) with the 23S rRNA of the 50S subunit in the ribosome. The chain is Small ribosomal subunit protein uS15 from Borrelia turicatae (strain 91E135).